A 132-amino-acid polypeptide reads, in one-letter code: Small ribosomal subunit protein uS8c (132 aa).

It belongs to the universal ribosomal protein uS8 family. Part of the 30S ribosomal subunit.

It is found in the plastid. Its subcellular location is the chloroplast. Functionally, one of the primary rRNA binding proteins, it binds directly to 16S rRNA central domain where it helps coordinate assembly of the platform of the 30S subunit. This Thalassiosira pseudonana (Marine diatom) protein is Small ribosomal subunit protein uS8c (rps8).